Consider the following 480-residue polypeptide: Cytochrome P450 monooxygenase ORF11 (480 aa).

A helical transmembrane segment spans residues 9-29; that stretch reads LLLLPHLSALTPKTGFLIGLA. 2 N-linked (GlcNAc...) asparagine glycosylation sites follow: Asn265 and Asn352. Heme is bound at residue Cys449.

This sequence belongs to the cytochrome P450 family. Heme is required as a cofactor.

The protein localises to the membrane. It functions in the pathway sesquiterpene biosynthesis. Cytochrome P450 monooxygenase; part of the gene cluster that mediates the biosynthesis of PR-toxin, a bicyclic sesquiterpene belonging to the eremophilane class and acting as a mycotoxin. The first step of the pathway is catalyzed by the aristolochene synthase which performs the cyclization of trans,trans-farnesyl diphosphate (FPP) to the bicyclic sesquiterpene aristolochene. Following the formation of aristolochene, the non-oxygenated aristolochene is converted to the trioxygenated intermediate eremofortin B, via 7-epi-neopetasone. This conversion appears to involve three enzymes, a hydroxysterol oxidase-like enzyme, the quinone-oxidase prx3 that forms the quinone-type-structure in the bicyclic nucleus of aristolochene with the C8-oxo group and the C-3 hydroxyl group, and the P450 monooxygenase ORF6 that introduces the epoxide at the double bond between carbons 1 and 2. No monoxy or dioxy-intermediates have been reported to be released to the broth, so these three early oxidative reactions may be coupled together. Eremofortin B is further oxidized by another P450 monooxygenase, that introduces a second epoxide between carbons 7 and 11 prior to acetylation to eremofortin A by the acetyltransferase ORF8. The second epoxidation may be performed by a second P450 monooxygenase. After the acetylation step, eremofortin A is converted to eremofortin C and then to PR-toxin. First the conversion of eremofortin A to eremofortin C proceeds by oxidation of the side chain of the molecule at C-12 and is catalyzed by the short-chain oxidoreductase prx1. The cytochrome P450 monooxygenase ORF6 is probably also involved in this step. The primary alcohol formed at C-12 is finally oxidized by the short-chain alcohol dehydrogenase prx4 that forms PR-toxin. This chain is Cytochrome P450 monooxygenase ORF11, found in Penicillium roqueforti (strain FM164).